We begin with the raw amino-acid sequence, 172 residues long: Small ribosomal subunit protein uS5 (172 aa).

Residues 17–80 (MREKMIAVNR…EEARRKMIKV (64 aa)) form the S5 DRBM domain.

The protein belongs to the universal ribosomal protein uS5 family. In terms of assembly, part of the 30S ribosomal subunit. Contacts proteins S4 and S8.

In terms of biological role, with S4 and S12 plays an important role in translational accuracy. Functionally, located at the back of the 30S subunit body where it stabilizes the conformation of the head with respect to the body. This is Small ribosomal subunit protein uS5 from Herminiimonas arsenicoxydans.